The following is a 448-amino-acid chain: Selenide, water dikinase 2 (448 aa).

At Ala-2 the chain carries N-acetylalanine. At Ser-46 the chain carries Phosphoserine. Residue Sec-60 is part of the active site. Position 60 (Sec-60) is a non-standard amino acid, selenocysteine. Lys-63 is an ATP binding site. The disordered stretch occupies residues 85 to 107; sequence LGRGLVGGQEEASQEAGLPAGAG. The residue at position 97 (Ser-97) is a Phosphoserine. Residues 118-120, Asp-138, Asp-161, and 212-215 each bind ATP; these read GMD and GGQT. Asp-120 serves as a coordination point for Mg(2+). Residue Asp-161 participates in Mg(2+) binding. Residue Asp-316 coordinates Mg(2+).

It belongs to the selenophosphate synthase 1 family. Class I subfamily. In terms of assembly, homodimer. Mg(2+) is required as a cofactor. In terms of processing, truncated SEPHS2 proteins produced by failed UGA/Sec decoding are ubiquitinated by the CRL2(KLHDC3) complex, which recognizes the glycine (Gly) at the C-terminus of truncated SEPHS2 proteins.

The catalysed reaction is hydrogenselenide + ATP + H2O = selenophosphate + AMP + phosphate + 2 H(+). Synthesizes selenophosphate from selenide and ATP. This chain is Selenide, water dikinase 2 (SEPHS2), found in Homo sapiens (Human).